Consider the following 168-residue polypeptide: Alkyl hydroperoxide reductase C (168 aa).

One can recognise a Thioredoxin domain in the interval 1 to 138 (EFIEVSEESF…LVNKIKAAQY (138 aa)). Cys28 acts as the Cysteine sulfenic acid (-SOH) intermediate in catalysis.

It belongs to the peroxiredoxin family. AhpC/Prx1 subfamily. As to quaternary structure, homodimer; disulfide-linked, upon oxidation. 5 homodimers assemble to form a ring-like decamer.

It localises to the cytoplasm. The enzyme catalyses a hydroperoxide + NADH + H(+) = an alcohol + NAD(+) + H2O. In terms of biological role, thiol-specific peroxidase that catalyzes the reduction of hydrogen peroxide and organic hydroperoxides to water and alcohols, respectively. Plays a role in cell protection against oxidative stress by detoxifying peroxides. The protein is Alkyl hydroperoxide reductase C of Ferdinandcohnia aciditolerans (strain JCM 32973 / CCTCC AB 2017280 / YN-1) (Bacillus aciditolerans).